A 441-amino-acid chain; its full sequence is Mitochondrial inner membrane protein OXA1L (441 aa).

At 1-113 (MALALMCGRR…QAAAEQSFAE (113 aa)) the chain is on the mitochondrial intermembrane side. A helical transmembrane segment spans residues 114-134 (LGLGSYTPVGLIQNLLEFMHV). At 135-139 (NLGLP) the chain is on the mitochondrial matrix side. A helical transmembrane segment spans residues 140-160 (WWGAIAACTVLARCLVFPLIV). Topologically, residues 161–212 (KGQREAAKIHNHLPEIQKFSARIREAKLTGNHTEFYRASSEMTFYQKKHDIK) are mitochondrial intermembrane. The helical transmembrane segment at 213–233 (LFRPLILPLTQAPIFISFFIA) threads the bilayer. At 234-260 (LREMANLPVPSLQTGGLWWFQDLTLSD) the chain is on the mitochondrial matrix side. The chain crosses the membrane as a helical span at residues 261 to 281 (PIYVLPLVVTATMWGVLELGA). Topologically, residues 282–298 (ETGMQSSDLQWMRNFIR) are mitochondrial intermembrane. The chain crosses the membrane as a helical span at residues 299–319 (LMPLAVLPITIHFPTAVFMYW). Over 320-441 (LSSNMFSLGQ…SKQPWRDTLG (122 aa)) the chain is Mitochondrial matrix. A Phosphoserine modification is found at Ser-364. Thr-400 is modified (phosphothreonine). The interval 405–441 (PLLQHGKNDPPNTPNSSSSSSSSNKAKSKQPWRDTLG) is disordered. Low complexity predominate over residues 418–429 (PNSSSSSSSSNK).

It belongs to the OXA1/ALB3/YidC family. Monomer; predominantly monomeric at low salt concentrations. Homooligomer; predominantly homooligomeric at high salt concentrations. Associates with the mitochondrial ribosome. Associates preferentially as a dimer with the large ribosomal subunit 39S of the mitochondrial ribosome. Interacts with OXA1L; promoting cotranslational quality control in mitochondria.

It localises to the mitochondrion inner membrane. Mitochondrial membrane insertase that mediates the cotranslational insertion of integral membrane proteins into the mitochondrial inner membrane. Essential for the activity and assembly of cytochrome oxidase. Required for the correct biogenesis of ATP synthase and complex I in mitochondria. In Bos taurus (Bovine), this protein is Mitochondrial inner membrane protein OXA1L (OXA1L).